A 108-amino-acid chain; its full sequence is Insulin (108 aa).

The signal sequence occupies residues 1–24 (MALWMHLLPLLALLALWGPEPAPA). Disulfide bonds link Cys-31/Cys-94, Cys-43/Cys-107, and Cys-93/Cys-98. The propeptide at 57 to 85 (EAEDLQVGQVELGGGSITGSLPPLEGPMQ) is c peptide.

This sequence belongs to the insulin family. In terms of assembly, heterodimer of a B chain and an A chain linked by two disulfide bonds.

It localises to the secreted. Insulin decreases blood glucose concentration. It increases cell permeability to monosaccharides, amino acids and fatty acids. It accelerates glycolysis, the pentose phosphate cycle, and glycogen synthesis in liver. The protein is Insulin (INS) of Aotus trivirgatus (Three-striped night monkey).